The chain runs to 127 residues: Small ribosomal subunit protein uS12 (127 aa).

Position 89 is a 3-methylthioaspartic acid (Asp89).

Belongs to the universal ribosomal protein uS12 family. As to quaternary structure, part of the 30S ribosomal subunit. Contacts proteins S8 and S17. May interact with IF1 in the 30S initiation complex.

With S4 and S5 plays an important role in translational accuracy. Its function is as follows. Interacts with and stabilizes bases of the 16S rRNA that are involved in tRNA selection in the A site and with the mRNA backbone. Located at the interface of the 30S and 50S subunits, it traverses the body of the 30S subunit contacting proteins on the other side and probably holding the rRNA structure together. The combined cluster of proteins S8, S12 and S17 appears to hold together the shoulder and platform of the 30S subunit. This Nautilia profundicola (strain ATCC BAA-1463 / DSM 18972 / AmH) protein is Small ribosomal subunit protein uS12.